The chain runs to 616 residues: Dihydroxy-acid dehydratase (616 aa).

Aspartate 81 is a Mg(2+) binding site. Cysteine 122 provides a ligand contact to [2Fe-2S] cluster. Aspartate 123 and lysine 124 together coordinate Mg(2+). Residue lysine 124 is modified to N6-carboxylysine. Residue cysteine 195 participates in [2Fe-2S] cluster binding. Mg(2+) is bound at residue glutamate 491. Serine 517 (proton acceptor) is an active-site residue.

Belongs to the IlvD/Edd family. In terms of assembly, homodimer. The cofactor is [2Fe-2S] cluster. Mg(2+) serves as cofactor.

The catalysed reaction is (2R)-2,3-dihydroxy-3-methylbutanoate = 3-methyl-2-oxobutanoate + H2O. It carries out the reaction (2R,3R)-2,3-dihydroxy-3-methylpentanoate = (S)-3-methyl-2-oxopentanoate + H2O. It functions in the pathway amino-acid biosynthesis; L-isoleucine biosynthesis; L-isoleucine from 2-oxobutanoate: step 3/4. Its pathway is amino-acid biosynthesis; L-valine biosynthesis; L-valine from pyruvate: step 3/4. Functionally, functions in the biosynthesis of branched-chain amino acids. Catalyzes the dehydration of (2R,3R)-2,3-dihydroxy-3-methylpentanoate (2,3-dihydroxy-3-methylvalerate) into 2-oxo-3-methylpentanoate (2-oxo-3-methylvalerate) and of (2R)-2,3-dihydroxy-3-methylbutanoate (2,3-dihydroxyisovalerate) into 2-oxo-3-methylbutanoate (2-oxoisovalerate), the penultimate precursor to L-isoleucine and L-valine, respectively. The protein is Dihydroxy-acid dehydratase of Yersinia pseudotuberculosis serotype O:1b (strain IP 31758).